Reading from the N-terminus, the 387-residue chain is Solute carrier family 25 protein Shawn (387 aa).

3 Solcar repeats span residues 37-156 (IRPL…FKAR), 179-263 (IPFL…LKSS), and 269-366 (PTFS…GKSF). Helical transmembrane passes span 43–63 (VASA…LDVI), 128–148 (LWSG…IYFV), 179–199 (IPFL…VTCV), 235–255 (LWRG…IYWT), 275–295 (FAAG…FDVV), and 337–357 (AIFS…AIMI).

The protein belongs to the mitochondrial carrier (TC 2.A.29) family.

It localises to the mitochondrion inner membrane. Mitochondrial transporter required for glutathione import into mitochondria. This Drosophila melanogaster (Fruit fly) protein is Solute carrier family 25 protein Shawn.